The following is a 427-amino-acid chain: Adenylosuccinate synthetase (427 aa).

GTP-binding positions include 12–18 and 40–42; these read GDEGKGK and GHT. Catalysis depends on D13, which acts as the Proton acceptor. Mg(2+)-binding residues include D13 and G40. IMP-binding positions include 13–16, 38–41, T128, R142, Q223, T238, and R302; these read DEGK and NAGH. H41 functions as the Proton donor in the catalytic mechanism. Substrate is bound at residue 298–304; it reads VTTGRDR. Residues R304, 330–332, and 412–414 each bind GTP; these read KLD and GVG.

Belongs to the adenylosuccinate synthetase family. In terms of assembly, homodimer. Mg(2+) serves as cofactor.

The protein localises to the cytoplasm. It carries out the reaction IMP + L-aspartate + GTP = N(6)-(1,2-dicarboxyethyl)-AMP + GDP + phosphate + 2 H(+). The protein operates within purine metabolism; AMP biosynthesis via de novo pathway; AMP from IMP: step 1/2. Plays an important role in the de novo pathway of purine nucleotide biosynthesis. Catalyzes the first committed step in the biosynthesis of AMP from IMP. In Streptomyces coelicolor (strain ATCC BAA-471 / A3(2) / M145), this protein is Adenylosuccinate synthetase.